A 441-amino-acid polypeptide reads, in one-letter code: Probable acetylornithine aminotransferase, mitochondrial (441 aa).

K294 is subject to N6-(pyridoxal phosphate)lysine.

It belongs to the class-III pyridoxal-phosphate-dependent aminotransferase family. Pyridoxal 5'-phosphate is required as a cofactor.

Its subcellular location is the mitochondrion matrix. The catalysed reaction is N(2)-acetyl-L-ornithine + 2-oxoglutarate = N-acetyl-L-glutamate 5-semialdehyde + L-glutamate. It functions in the pathway amino-acid biosynthesis; L-arginine biosynthesis; N(2)-acetyl-L-ornithine from L-glutamate: step 4/4. The chain is Probable acetylornithine aminotransferase, mitochondrial (arg1) from Schizosaccharomyces pombe (strain 972 / ATCC 24843) (Fission yeast).